The chain runs to 315 residues: Solute carrier family 25 member 32 (315 aa).

Solcar repeat units follow at residues 20 to 109 (HVRY…IKSY), 118 to 209 (LEAT…LKLK), and 222 to 306 (LSTV…VSHF). The next 6 helical transmembrane spans lie at 26-43 (LIAG…LHPL), 89-106 (IWGA…YNAI), 123-143 (YLVS…PLWV), 186-203 (FVPG…FMAY), 227-243 (YISV…AATY), and 281-300 (GIAP…FVVY).

It belongs to the mitochondrial carrier (TC 2.A.29) family. As to expression, ubiquitous.

It is found in the mitochondrion inner membrane. It catalyses the reaction FAD(in) = FAD(out). Its function is as follows. Facilitates flavin adenine dinucleotide (FAD) translocation across the mitochondrial inner membrane into the mitochondrial matrix where it acts as a redox cofactor to assist flavoenzyme activities in fundamental metabolic processes including fatty acid beta-oxidation, amino acid and choline metabolism as well as mitochondrial electron transportation. In particular, provides FAD to DLD dehydrogenase of the glycine cleavage system, part of mitochondrial one-carbon metabolic pathway involved in neural tube closure in early embryogenesis. This Homo sapiens (Human) protein is Solute carrier family 25 member 32.